The chain runs to 46 residues: Pape peptide (46 aa).

The segment covering 1–10 (KQLLKEALAP) has biased composition (low complexity). The tract at residues 1–46 (KQLLKEALAPEPAPKPAPEPAPEPAPEPAPEAAPEPAAAAPEAAPE) is disordered. Residues 11–33 (EPAPKPAPEPAPEPAPEPAPEAA) show a composition bias toward pro residues. PAPE repeat units follow at residues 16 to 19 (PAPE), 20 to 23 (PAPE), 24 to 27 (PAPE), and 28 to 31 (PAPE). Residues 34-46 (PEPAAAAPEAAPE) show a composition bias toward low complexity.

Expressed by the venom gland.

It is found in the secreted. The polypeptide is Pape peptide (Tityus stigmurus (Brazilian scorpion)).